The following is a 340-amino-acid chain: MHAVSMTIIGAGSYGTALAIVLARNGHHVLLWGYNPQHIRELQEYRCNQAFLPDVQFPDNLCPEDSLETAIKASRNILIAVPSHVFHQVLYNIRPYLDQHSRIIWATKGLEHGTGRLLQEVAREILGDKIPLAVFSGPTFAKELAIGLPTAITIAASDTEFSEELQQLFHFDKSFRVYKNSDMIGVQLGGAVKNVIAIGAGISDGMGFGANARIALITRGLAEISRLGIAMGAELSTFMGMTGLGDLVLTCTDNQSRNRRFGMLLGQGVDIEEAKKQIDQIVEGYLNTKEVHMLAQRIRVEMPITEQIYHVLYCGKSVSEAANALLSRQLKDEMYDTVRF.

NADPH contacts are provided by S13, Y14, and K108. Sn-glycerol 3-phosphate-binding residues include K108, G137, and T139. A141 serves as a coordination point for NADPH. Residues K193, D246, S256, R257, and N258 each contribute to the sn-glycerol 3-phosphate site. The active-site Proton acceptor is K193. Residue R257 participates in NADPH binding. NADPH is bound by residues I281 and E283.

Belongs to the NAD-dependent glycerol-3-phosphate dehydrogenase family.

Its subcellular location is the cytoplasm. It carries out the reaction sn-glycerol 3-phosphate + NAD(+) = dihydroxyacetone phosphate + NADH + H(+). It catalyses the reaction sn-glycerol 3-phosphate + NADP(+) = dihydroxyacetone phosphate + NADPH + H(+). The protein operates within membrane lipid metabolism; glycerophospholipid metabolism. Catalyzes the reduction of the glycolytic intermediate dihydroxyacetone phosphate (DHAP) to sn-glycerol 3-phosphate (G3P), the key precursor for phospholipid synthesis. In Bartonella henselae (strain ATCC 49882 / DSM 28221 / CCUG 30454 / Houston 1) (Rochalimaea henselae), this protein is Glycerol-3-phosphate dehydrogenase [NAD(P)+].